We begin with the raw amino-acid sequence, 795 residues long: Phenylalanine--tRNA ligase beta subunit (795 aa).

One can recognise a tRNA-binding domain in the interval 39–148; that stretch reads AGSFHGVVVG…ADAPIGTDIR (110 aa). Residues 401–476 form the B5 domain; that stretch reads PKRATITLRR…RVYGYNNIPD (76 aa). Asp454, Asp460, Glu463, and Glu464 together coordinate Mg(2+). The region spanning 701–794 is the FDX-ACB domain; it reads SRFPANRRDI…LKERFQASLR (94 aa).

The protein belongs to the phenylalanyl-tRNA synthetase beta subunit family. Type 1 subfamily. As to quaternary structure, tetramer of two alpha and two beta subunits. Mg(2+) serves as cofactor.

It localises to the cytoplasm. The enzyme catalyses tRNA(Phe) + L-phenylalanine + ATP = L-phenylalanyl-tRNA(Phe) + AMP + diphosphate + H(+). The sequence is that of Phenylalanine--tRNA ligase beta subunit (pheT) from Escherichia coli (strain K12).